The chain runs to 812 residues: Protein let-653 (812 aa).

The N-terminal stretch at 1-21 (MRHPLISLLLLIAFYSTSSEA) is a signal peptide. 2 consecutive Apple domains span residues 26-116 (CNSF…WKYC) and 123-209 (CSGE…ENNC). 6 disulfide bridges follow: Cys-26–Cys-116, Cys-53–Cys-88, Cys-57–Cys-72, Cys-123–Cys-209, Cys-154–Cys-178, and Cys-158–Cys-166. N-linked (GlcNAc...) asparagine glycans are attached at residues Asn-172, Asn-211, and Asn-272. The 505-residue stretch at 221 to 725 (ECRDNGISVS…NTCDDVEGCD (505 aa)) folds into the ZP domain. Composition is skewed to low complexity over residues 375–449 (QVTT…STTT) and 496–584 (PTTT…PASS). Disordered regions lie at residues 375–461 (QVTT…STIM) and 494–584 (DVPT…PASS). A glycan (N-linked (GlcNAc...) asparagine) is linked at Asn-771.

Post-translationally, cleaved at the C-terminal domain. In terms of tissue distribution, expressed in external cuticle-producing epithelial cells including the epidermis, vulva, rectum, excretory duct and excretory pore.

Its subcellular location is the apical cell membrane. The protein localises to the secreted. The protein resides in the extracellular space. In terms of biological role, required for epithelial tube development and shaping. Involved in the morphogenesis and function of the three unicellular tubes of the excretory system, the canal cell, the duct cell and the pore cell. Also plays a role in cuticle development, alae formation and shaping of the vulval lumen. Required for larval development. The protein is Protein let-653 of Caenorhabditis elegans.